The sequence spans 159 residues: Large ribosomal subunit protein uL22 (159 aa).

It belongs to the universal ribosomal protein uL22 family. Part of the 50S ribosomal subunit.

This protein binds specifically to 23S rRNA. It makes multiple contacts with different domains of the 23S rRNA in the assembled 50S subunit and ribosome. Functionally, the globular domain of the protein is located near the polypeptide exit tunnel on the outside of the subunit, while an extended beta-hairpin is found that lines the wall of the exit tunnel in the center of the 70S ribosome. In Methanopyrus kandleri (strain AV19 / DSM 6324 / JCM 9639 / NBRC 100938), this protein is Large ribosomal subunit protein uL22.